The chain runs to 363 residues: MAKQKIRVLIVDDSASVRQVLGTILAEDPEIEVIGTASDPFVAAKRLQNELPDVILLDIEMPRMDGITFLRKIMAQHPIPVVICSSLTPEGSDLMFEALEAGAVDIVPKPRVDTRQALMESSGRLREAIKSAARARVRPRAARKVIEQKLTADAIIPPPVAGRSRPTTERIVCIGVSTGGTEALYDVLEVLPPNCPGILIVQHMPQGFTAAFAKRLNAGCQINVKEAEDGDPVLPGWAYIAPGARHMLLVRSGLRYQIAIKDGPPVSRHRPSADVLFRSAAQYAGANALGIIMTGMGDDGARGLLEMRKLGAYTCAQDEESCVVFGMPKEAIACGAVEKVVSLNQIPREIMAWQQAKQPASAD.

The 118-residue stretch at 7–124 (RVLIVDDSAS…RQALMESSGR (118 aa)) folds into the Response regulatory domain. Residue aspartate 58 is modified to 4-aspartylphosphate. Residues 166–357 (PTTERIVCIG…REIMAWQQAK (192 aa)) enclose the CheB-type methylesterase domain. Active-site residues include serine 177, histidine 203, and aspartate 299.

It belongs to the CheB family. Post-translationally, phosphorylated by CheA. Phosphorylation of the N-terminal regulatory domain activates the methylesterase activity.

Its subcellular location is the cytoplasm. The enzyme catalyses [protein]-L-glutamate 5-O-methyl ester + H2O = L-glutamyl-[protein] + methanol + H(+). The catalysed reaction is L-glutaminyl-[protein] + H2O = L-glutamyl-[protein] + NH4(+). Involved in chemotaxis. Part of a chemotaxis signal transduction system that modulates chemotaxis in response to various stimuli. Catalyzes the demethylation of specific methylglutamate residues introduced into the chemoreceptors (methyl-accepting chemotaxis proteins or MCP) by CheR. Also mediates the irreversible deamidation of specific glutamine residues to glutamic acid. This is Protein-glutamate methylesterase/protein-glutamine glutaminase of group 3 operon from Rhodopseudomonas palustris (strain ATCC BAA-98 / CGA009).